We begin with the raw amino-acid sequence, 299 residues long: Ribosomal RNA small subunit methyltransferase H (299 aa).

S-adenosyl-L-methionine contacts are provided by residues glycine 36 to histidine 38, aspartate 55, aspartate 103, and glutamine 110. Basic and acidic residues-rich tracts occupy residues lysine 268–arginine 282 and arginine 289–aspartate 299. Positions lysine 268–aspartate 299 are disordered.

Belongs to the methyltransferase superfamily. RsmH family.

The protein localises to the cytoplasm. It catalyses the reaction cytidine(1402) in 16S rRNA + S-adenosyl-L-methionine = N(4)-methylcytidine(1402) in 16S rRNA + S-adenosyl-L-homocysteine + H(+). In terms of biological role, specifically methylates the N4 position of cytidine in position 1402 (C1402) of 16S rRNA. In Thermotoga petrophila (strain ATCC BAA-488 / DSM 13995 / JCM 10881 / RKU-1), this protein is Ribosomal RNA small subunit methyltransferase H.